Reading from the N-terminus, the 540-residue chain is Solute carrier family 22 member 7 (540 aa).

12 helical membrane-spanning segments follow: residues 21–41 (LVLL…PIFM), 144–164 (VTST…GYLS), 172–192 (LLLV…ASVN), 202–222 (LTGS…LEWL), 232–252 (VIST…GYLI), 257–277 (WLLL…WWVP), 344–364 (VSLC…GLTL), 378–398 (LLFG…VRLV), 402–422 (LTEA…LLVS), 429–449 (ITAL…TAYL), 462–484 (TGMG…VVLL), and 488–510 (WLLL…VLLL).

The protein belongs to the major facilitator (TC 2.A.1) superfamily. Organic cation transporter (TC 2.A.1.19) family. In terms of tissue distribution, abundant expression in male and female kidney. In kidney, expressed at the brush border of the proximal tubule S3 segment (S3) in the outer stripe and medullary rays. In kidney, expression is higher in female than male. Also expressed in female liver.

It localises to the basolateral cell membrane. Its subcellular location is the apical cell membrane. The protein resides in the cell membrane. The catalysed reaction is orotate(out) + L-glutamate(in) = orotate(in) + L-glutamate(out). The enzyme catalyses 3',5'-cyclic GMP(in) = 3',5'-cyclic GMP(out). It carries out the reaction GMP(in) = GMP(out). It catalyses the reaction 2'-deoxyguanosine(in) = 2'-deoxyguanosine(out). The catalysed reaction is GDP(in) = GDP(out). The enzyme catalyses guanosine(in) = guanosine(out). It carries out the reaction GTP(in) = GTP(out). It catalyses the reaction 3',5'-cyclic AMP(in) = 3',5'-cyclic AMP(out). The catalysed reaction is creatinine(in) = creatinine(out). The enzyme catalyses prostaglandin E2(out) = prostaglandin E2(in). It carries out the reaction 2-oxoglutarate(in) = 2-oxoglutarate(out). It catalyses the reaction glutarate(in) = glutarate(out). The catalysed reaction is urate(out) = urate(in). The enzyme catalyses estrone 3-sulfate(out) = estrone 3-sulfate(in). In terms of biological role, functions as a Na(+)-independent bidirectional multispecific transporter. Contributes to the renal and hepatic elimination of endogenous organic compounds from the systemic circulation into the urine and bile, respectively. Capable of transporting a wide range of purine and pyrimidine nucleobases, nucleosides, and nucleotides with cGMP, 2'deoxyguanosine and GMP being the preferred substrates. Functions as a pH- and chloride-independent cGMP bidirectional facilitative transporter that can regulate both intracellular and extracellular levels of cGMP and may be involved in cGMP signaling pathways. Mediates orotate/glutamate bidirectional exchange and most likely display a physiological role in hepatic release of glutamate into the blood. Involved in renal secretion and possible reabsorption of creatinine. Able to uptake prostaglandin E2 (PGE2) and may contribute to PGE2 renal excretion. Also transports alpha-ketoglutarate and urate. Unlike human hortolog, able to transport glutarate. Apart from the orotate/glutamate exchange, the counterions for the uptake of other SLC22A7/OAT2 substrates remain to be identified. This chain is Solute carrier family 22 member 7, found in Mus musculus (Mouse).